A 459-amino-acid polypeptide reads, in one-letter code: mRNA-capping enzyme subunit alpha (459 aa).

The active-site N6-GMP-lysine intermediate is Lys-70. The segment at 415–459 (MAGGSGRPLPSQSQNATLSTSKPVHSQPPSNDKEPKYVDEDDWSD) is disordered. Residues 424 to 444 (PSQSQNATLSTSKPVHSQPPS) are compositionally biased toward polar residues.

Belongs to the eukaryotic GTase family. In terms of assembly, heterodimer. The mRNA-capping enzyme is composed of two separate chains alpha and beta, respectively a mRNA guanylyltransferase and an mRNA 5'-triphosphate monophosphatase.

It localises to the nucleus. It catalyses the reaction a 5'-end diphospho-ribonucleoside in mRNA + GTP + H(+) = a 5'-end (5'-triphosphoguanosine)-ribonucleoside in mRNA + diphosphate. Second step of mRNA capping. Transfer of the GMP moiety of GTP to the 5'-diphosphate terminus of RNA via a covalent enzyme-GMP reaction intermediate. This chain is mRNA-capping enzyme subunit alpha (CEG1), found in Saccharomyces cerevisiae (strain ATCC 204508 / S288c) (Baker's yeast).